Here is a 353-residue protein sequence, read N- to C-terminus: Photosystem II D2 protein (353 aa).

Thr2 bears the N-acetylthreonine mark. Thr2 is modified (phosphothreonine). Residues 41 to 61 (CAYFALGGWFTGTTFVTSWYT) traverse the membrane as a helical segment. His118 is a binding site for chlorophyll a. Residues 125–141 (GFMLRQFELARSVQLRP) form a helical membrane-spanning segment. Pheophytin a is bound by residues Gln130 and Asn143. A helical transmembrane segment spans residues 153–166 (VFVSVFLIYPLGQS). His198 serves as a coordination point for chlorophyll a. A helical transmembrane segment spans residues 208–228 (AALLCAIHGATVENTLFEDGD). A plastoquinone is bound by residues His215 and Phe262. His215 contacts Fe cation. His269 provides a ligand contact to Fe cation. The chain crosses the membrane as a helical span at residues 279-295 (GLWMSALGVVGLALNLR).

It belongs to the reaction center PufL/M/PsbA/D family. As to quaternary structure, PSII is composed of 1 copy each of membrane proteins PsbA, PsbB, PsbC, PsbD, PsbE, PsbF, PsbH, PsbI, PsbJ, PsbK, PsbL, PsbM, PsbT, PsbX, PsbY, PsbZ, Psb30/Ycf12, at least 3 peripheral proteins of the oxygen-evolving complex and a large number of cofactors. It forms dimeric complexes. The D1/D2 heterodimer binds P680, chlorophylls that are the primary electron donor of PSII, and subsequent electron acceptors. It shares a non-heme iron and each subunit binds pheophytin, quinone, additional chlorophylls, carotenoids and lipids. There is also a Cl(-1) ion associated with D1 and D2, which is required for oxygen evolution. The PSII complex binds additional chlorophylls, carotenoids and specific lipids. is required as a cofactor.

The protein resides in the plastid. It localises to the chloroplast thylakoid membrane. It catalyses the reaction 2 a plastoquinone + 4 hnu + 2 H2O = 2 a plastoquinol + O2. Its function is as follows. Photosystem II (PSII) is a light-driven water:plastoquinone oxidoreductase that uses light energy to abstract electrons from H(2)O, generating O(2) and a proton gradient subsequently used for ATP formation. It consists of a core antenna complex that captures photons, and an electron transfer chain that converts photonic excitation into a charge separation. The D1/D2 (PsbA/PsbD) reaction center heterodimer binds P680, the primary electron donor of PSII as well as several subsequent electron acceptors. D2 is needed for assembly of a stable PSII complex. In Ceratophyllum demersum (Rigid hornwort), this protein is Photosystem II D2 protein.